The chain runs to 642 residues: MSLETYKFSDELHDDFKVVDSWINNGAKWLEDIQLYYKERSSIEKEYAQKLASLSNKYGEKKSRKSSALSVGDTPAMSAGSLECASLTTWSKILDELTRSSKTHQKLSDDYSLDIAEKLKKLESHIEALRKVYDDLYKKFSSEKETLLNSVKRAKVSYHEACDDLESARQKNDKYREQKTQRNLKLSESDMLDKKNKYLLRMLVYNAHKQKFYNETLPTLLNHMQVLNEYRVSNLNEIWCNSFSIEKSLHDTLSQRTVEIQSEIAKNEPVLDSAMFGRHNSKNWALPADLHFEPSPIWHDTDALVVDGSCKNYLRNLLVHSKNDLGKQKGELVSLDSQLEGLRVDDPNSANQSFESKKASINLEGKELMVKARIEDLEVRINKITSVANNLEEGGRFHDFKHVSFKLPTSCSYCREIIWGLSKRGCVCKNCGFKCHARCELLVPANCKNGEPEVADDDAVDTSVTATDDFDASASSSNAYESYRNTYTDDMDSSSIYQTSLSNVKTEETTPAEPASKVDGVVLYDFTGEHEGVITASEGQEFTLLEPDDGSGWVRVKIDGTDGLIPASYVKLNDELNTSVTLDGDSSYVKALYAYTAQSDMELSIQEGDIIQVTNRNAGNGWSEGILNGVTGQFPANYVTDV.

The region spanning 6-272 (YKFSDELHDD…EIAKNEPVLD (267 aa)) is the F-BAR domain. The stretch at 113-190 (LDIAEKLKKL…QRNLKLSESD (78 aa)) forms a coiled coil. The segment at 397–447 (FHDFKHVSFKLPTSCSYCREIIWGLSKRGCVCKNCGFKCHARCELLVPANC) adopts a Phorbol-ester/DAG-type zinc-finger fold. SH3 domains follow at residues 515 to 575 (ASKV…LNDE) and 584 to 642 (GDSS…VTDV).

Belongs to the BZZ1 family.

It is found in the cell tip. Its subcellular location is the cytoplasm. The protein localises to the cytoskeleton. It localises to the actin patch. Plays a role in endocytosis and trafficking to the vacuole. Functions with type I myosins to restore polarity of the actin cytoskeleton after NaCl stress. This chain is Protein BZZ1 (bzz1), found in Schizosaccharomyces pombe (strain 972 / ATCC 24843) (Fission yeast).